A 1851-amino-acid polypeptide reads, in one-letter code: Protein lap4 (1851 aa).

LRR repeat units follow at residues 38-59 (TLEE…FFRL), 61-82 (RLRK…IQNF), 84-105 (NLVE…IKHL), 107-128 (SLQV…FSQL), 130-152 (NLTV…GSLT), 153-174 (QLES…ISQL), 176-197 (KLKR…LGYL), 199-220 (GLHE…LGLL), 222-243 (KLTY…ISGL), 245-267 (SLTD…AKLS), 268-289 (RLTI…LGNC), 291-312 (NMQE…IGQM), 314-335 (KLNN…IGQC), 337-358 (NLGV…LGNC), 360-382 (VLHV…VNLQ), and 383-403 (LKAV…QPDT). 3 disordered regions span residues 427 to 474 (PARD…KDLK), 584 to 641 (VGGS…VQHL), and 656 to 719 (SQER…PDNL). A phosphoserine mark is found at S433 and S435. Residues 438 to 461 (FEEREPSRTVVKFSEEATQEKETP) show a composition bias toward basic and acidic residues. Residues 471–492 (KDLKAKAQKLKVERSRNEEHAN) are a coiled coil. Residues 589 to 601 (EVQDDDEQEDEFE) are compositionally biased toward acidic residues. The segment covering 620 to 639 (RPPKLHRRDTPHHLKNKRVQ) has biased composition (basic residues). Over residues 656–672 (SQERNDTTPQHSLSGKV) the composition is skewed to polar residues. A compositionally biased stretch (acidic residues) spans 676–686 (IEEEEQLEVEQ). A coiled-coil region spans residues 677–693 (EEEEQLEVEQEQQQQQQ). A phosphoserine mark is found at S700, S702, and S705. Positions 731 to 818 (EIHIERTAAG…VLVLVVQREV (88 aa)) constitute a PDZ 1 domain. Phosphoserine occurs at positions 834 and 837. A PDZ 2 domain is found at 929–1019 (HTTLIRDQIG…FVRLVLQREY (91 aa)). S1031 and S1041 each carry phosphoserine. Positions 1067–1150 (LATTTPTPKP…EAQPSSLRPL (84 aa)) are disordered. Composition is skewed to polar residues over residues 1080 to 1097 (ASIS…TNGF) and 1132 to 1149 (GSTT…SLRP). 2 PDZ domains span residues 1239–1329 (EVVL…QHDP) and 1336–1428 (EVLL…CKGY). A compositionally biased stretch (polar residues) spans 1448 to 1467 (NSSASCSGGSRQGSRASETG). The segment at 1448–1485 (NSSASCSGGSRQGSRASETGSELSQSQSVSSLDHEEDE) is disordered. Over residues 1468 to 1478 (SELSQSQSVSS) the composition is skewed to low complexity. A phosphoserine mark is found at S1475, S1477, and S1478. Position 1599 is a phosphothreonine (T1599). Low complexity predominate over residues 1647-1669 (AESANSAGAPSPAVPASTPGSAP). 2 disordered regions span residues 1647-1751 (AESA…KVFS) and 1772-1851 (LRRD…VFRS). The segment covering 1725-1751 (VSDKKRFFESAMEDQHKPTQKTDKVFS) has biased composition (basic and acidic residues). The stretch at 1753 to 1790 (LSKDEVEKLRQEEERKIATLRRDKNSRLLDAANDNIDK) forms a coiled coil. Residues 1807-1816 (DDNDDSDQEE) show a composition bias toward acidic residues. The segment covering 1831–1851 (HFDDAEDMRNPLDEIEAVFRS) has biased composition (basic and acidic residues).

Belongs to the LAP (LRR and PDZ) protein family. In terms of tissue distribution, during germ band extension, expression of isoform A occurs predominantly in neuroblasts derived from the neuro-ectoderm and later is restricted to CNS neurons and pole cells. Isoform C is strongly expressed in PNS and a subset of CNS neurons. In the adult, expressed in third antennal segment and maxillary palps, major olfactory organs and in Johnstons organ in the second antennal segment. Expression is also observed in cortical regions of the brain. Isoforms expressed in epithelia are coexpressed with dlg1 throughout development.

The protein localises to the cytoplasm. The protein resides in the apicolateral cell membrane. It is found in the cell junction. Its subcellular location is the septate junction. Required for polarization of the embryonic, imaginal disk and follicular epithelia. Specifically restricts apical membrane determinants to the apical cell surface; acts to exclude crb from the basolateral domain and define adherens junction position. Regulates cellular growth and differentiation; acts as a tumor suppressor. Essential for odor guided behavior. The polypeptide is Protein lap4 (Drosophila melanogaster (Fruit fly)).